A 1918-amino-acid polypeptide reads, in one-letter code: Diacylglycerol kinase eta (1918 aa).

A compositionally biased stretch (basic and acidic residues) spans 1-10 (MAHLKLDTLH). The interval 1–37 (MAHLKLDTLHVQRSPRGSRRSSPSSGRSSACSSGSIS) is disordered. Positions 20–37 (RSSPSSGRSSACSSGSIS) are enriched in low complexity. A PH domain is found at 82–175 (AIIKEGFLLK…WLGGLKTATA (94 aa)). 2 Phorbol-ester/DAG-type zinc fingers span residues 195–245 (HHHW…IANC) and 268–319 (PHQW…AVAC). The region spanning 350 to 486 (GNFSPLLVFV…DRWSIMVFEK (137 aa)) is the DAGKc domain. Disordered regions lie at residues 783–805 (GANI…NTPT), 1017–1067 (TTLC…DDNP), 1177–1212 (PNTI…GDSI), and 1380–1399 (ERDK…TEEA). The span at 1177–1189 (PNTILTTSTSPTK) shows a compositional bias: polar residues. Residues 1855-1918 (WSVNEVVTWL…LQAIKDLSEN (64 aa)) enclose the SAM domain.

The protein belongs to the eukaryotic diacylglycerol kinase family.

It is found in the cytoplasm. The enzyme catalyses a 1,2-diacyl-sn-glycerol + ATP = a 1,2-diacyl-sn-glycero-3-phosphate + ADP + H(+). Phosphorylates diacylglycerol (DAG) to generate phosphatidic acid (PA). In Drosophila erecta (Fruit fly), this protein is Diacylglycerol kinase eta.